A 242-amino-acid polypeptide reads, in one-letter code: Orotidine 5'-phosphate decarboxylase (242 aa).

Residues D21, K43, 71 to 80, T124, R185, Q195, G215, and R216 each bind substrate; that span reads DLKFFDVPET. K73 serves as the catalytic Proton donor.

Belongs to the OMP decarboxylase family. Type 1 subfamily. As to quaternary structure, homodimer.

It catalyses the reaction orotidine 5'-phosphate + H(+) = UMP + CO2. Its pathway is pyrimidine metabolism; UMP biosynthesis via de novo pathway; UMP from orotate: step 2/2. Functionally, catalyzes the decarboxylation of orotidine 5'-monophosphate (OMP) to uridine 5'-monophosphate (UMP). This is Orotidine 5'-phosphate decarboxylase from Methylococcus capsulatus (strain ATCC 33009 / NCIMB 11132 / Bath).